A 542-amino-acid chain; its full sequence is uncharacterized protein (542 aa).

5 helical membrane-spanning segments follow: residues 4–23, 28–47, 51–70, 91–113, and 160–182; these read FVEN…LLLG, FGFR…FSTI, ITVP…YTIG, LALG…LGLA, and YSLT…GGLF. RCK C-terminal domains lie at 190–272 and 274–355; these read AKNA…LLGE and VDGH…IFGD. 5 consecutive transmembrane segments (helical) span residues 363 to 385, 390 to 412, 425 to 447, 457 to 479, and 519 to 541; these read FNLV…EFPL, ALSL…MGRT, LALR…GAGF, LLII…VIGH, and YTSV…LFLL.

Belongs to the AAE transporter (TC 2.A.81) family.

The protein resides in the cell membrane. This is an uncharacterized protein from Corynebacterium efficiens (strain DSM 44549 / YS-314 / AJ 12310 / JCM 11189 / NBRC 100395).